A 530-amino-acid chain; its full sequence is Glucose-6-phosphate isomerase (530 aa).

E335 (proton donor) is an active-site residue. Residues H366 and K495 contribute to the active site.

It belongs to the GPI family.

The protein resides in the cytoplasm. It catalyses the reaction alpha-D-glucose 6-phosphate = beta-D-fructose 6-phosphate. The protein operates within carbohydrate biosynthesis; gluconeogenesis. It functions in the pathway carbohydrate degradation; glycolysis; D-glyceraldehyde 3-phosphate and glycerone phosphate from D-glucose: step 2/4. In terms of biological role, catalyzes the reversible isomerization of glucose-6-phosphate to fructose-6-phosphate. The protein is Glucose-6-phosphate isomerase of Roseobacter denitrificans (strain ATCC 33942 / OCh 114) (Erythrobacter sp. (strain OCh 114)).